A 332-amino-acid polypeptide reads, in one-letter code: Stage II sporulation protein B (332 aa).

Residues 1–10 (MKKRKNKKNS) show a composition bias toward basic residues. The tract at residues 1-71 (MKKRKNKKNS…EHPDEDEFNW (71 aa)) is disordered. The span at 11–27 (KAAEKALKVTINGKEET) shows a compositional bias: basic and acidic residues. Residues 112–132 (AATIAFAAVIGTGLGLFALNI) traverse the membrane as a helical segment. Positions 139-174 (SAPASLEDSLGSQTAKAGDTSADKQTSGAEKQAAQT) are disordered. The segment covering 161 to 174 (DKQTSGAEKQAAQT) has biased composition (polar residues). The SPOR domain maps to 175 to 250 (EGTYKTYAVQ…SDFEAWGGKE (76 aa)).

It localises to the cell membrane. With respect to regulation, appears to be degraded early in engulfment, in correlation with its loss from polar septa. Its function is as follows. Facilitates the rapid and spatially regulated dissolution of septal peptidoglycan. In Bacillus subtilis (strain 168), this protein is Stage II sporulation protein B.